Here is a 311-residue protein sequence, read N- to C-terminus: MECKRARAYSSSANLGSGFDILSMAHTAFFDTVEICVETKNSENIVIESNSKIPLEPNRNSATYPLVRIMEERGIKASLRVKVIKGIPEGLGLGSSGASATAAVMAFSSLFNLNLSKEDLVRYAMYGEIASSGSPHPDNVAASVFGGVVSVVSVNPVKVVEIPLNYSFNILLFVPLNIHIEEKTKKAREMVPKTVKLSDYINNSRYISSLLIGFVKGERDLIRLGLNDEIVEKARLPLFPYYPKIKEIAIKYDAVGSCVSGAGPSILVLTDKMTDENKIAEEGTKTCNEFNVECEVIKAKIAGGVEVERRN.

Residue 88 to 98 (PEGLGLGSSGA) coordinates ATP.

This sequence belongs to the GHMP kinase family. Homoserine kinase subfamily.

The protein localises to the cytoplasm. The enzyme catalyses L-homoserine + ATP = O-phospho-L-homoserine + ADP + H(+). Its pathway is amino-acid biosynthesis; L-threonine biosynthesis; L-threonine from L-aspartate: step 4/5. Functionally, catalyzes the ATP-dependent phosphorylation of L-homoserine to L-homoserine phosphate. The polypeptide is Homoserine kinase (Saccharolobus islandicus (strain Y.N.15.51 / Yellowstone #2) (Sulfolobus islandicus)).